The sequence spans 205 residues: High frequency lysogenization protein HflD homolog (205 aa).

Belongs to the HflD family.

The protein resides in the cytoplasm. It is found in the cell inner membrane. The sequence is that of High frequency lysogenization protein HflD homolog from Shewanella sp. (strain W3-18-1).